Reading from the N-terminus, the 318-residue chain is Transaldolase (318 aa).

Lysine 132 functions as the Schiff-base intermediate with substrate in the catalytic mechanism.

This sequence belongs to the transaldolase family. Type 1 subfamily. In terms of assembly, homodimer.

Its subcellular location is the cytoplasm. It catalyses the reaction D-sedoheptulose 7-phosphate + D-glyceraldehyde 3-phosphate = D-erythrose 4-phosphate + beta-D-fructose 6-phosphate. Its pathway is carbohydrate degradation; pentose phosphate pathway; D-glyceraldehyde 3-phosphate and beta-D-fructose 6-phosphate from D-ribose 5-phosphate and D-xylulose 5-phosphate (non-oxidative stage): step 2/3. Its function is as follows. Transaldolase is important for the balance of metabolites in the pentose-phosphate pathway. In Shewanella loihica (strain ATCC BAA-1088 / PV-4), this protein is Transaldolase.